A 480-amino-acid chain; its full sequence is Glutamyl-tRNA(Gln) amidotransferase subunit A (480 aa).

Residues Lys76 and Ser151 each act as charge relay system in the active site. The active-site Acyl-ester intermediate is Ser175.

Belongs to the amidase family. GatA subfamily. Heterotrimer of A, B and C subunits.

The enzyme catalyses L-glutamyl-tRNA(Gln) + L-glutamine + ATP + H2O = L-glutaminyl-tRNA(Gln) + L-glutamate + ADP + phosphate + H(+). Functionally, allows the formation of correctly charged Gln-tRNA(Gln) through the transamidation of misacylated Glu-tRNA(Gln) in organisms which lack glutaminyl-tRNA synthetase. The reaction takes place in the presence of glutamine and ATP through an activated gamma-phospho-Glu-tRNA(Gln). This is Glutamyl-tRNA(Gln) amidotransferase subunit A from Exiguobacterium sp. (strain ATCC BAA-1283 / AT1b).